A 261-amino-acid chain; its full sequence is Zinc import ATP-binding protein ZnuC (261 aa).

Positions 6 to 227 (IQLNNIHLRF…PEYLKLFGKQ (222 aa)) constitute an ABC transporter domain. 38–45 (GPNGAGKS) is an ATP binding site.

The protein belongs to the ABC transporter superfamily. Zinc importer (TC 3.A.1.15.5) family. In terms of assembly, the complex is composed of two ATP-binding proteins (ZnuC), two transmembrane proteins (ZnuB) and a solute-binding protein (ZnuA).

It localises to the cell inner membrane. It carries out the reaction Zn(2+)(out) + ATP(in) + H2O(in) = Zn(2+)(in) + ADP(in) + phosphate(in) + H(+)(in). Part of the ABC transporter complex ZnuABC involved in zinc import. Responsible for energy coupling to the transport system. This chain is Zinc import ATP-binding protein ZnuC, found in Saccharophagus degradans (strain 2-40 / ATCC 43961 / DSM 17024).